The sequence spans 365 residues: MLDQKDNLLSSYNYDLPNELIAQSPTKSRHDAKLMIVKDGLDDSLNLVHAKVWDIKDILKPADLLVVNNTRVVKARLKIRLSGGGAGELLLMEPRGDGRWLCLGRPARRMRGGDQLWLDMSRDNSLILKVIDKDERTGGRIIQFSNEFTSWTEMENILDLCGEVPLPPYIDKDKSSDHEESYQTRFASKPGAIAAPTAGLHLSDELIENLKTRGIKIAQITLHVGLGTFRPLEKEDLSQLHLHSEWIEVTEETIKAITNCKEDGGKVFAVGTTSVRALEAAYLSGRGALKPYEGKVDLVIKPGFKFSVIDGLLTNFHLPKSSLLLLVSALIGRKRMLKLYKQAISNKYRFFSYGDAMLITPESVI.

Belongs to the QueA family. Monomer.

The protein localises to the cytoplasm. The enzyme catalyses 7-aminomethyl-7-carbaguanosine(34) in tRNA + S-adenosyl-L-methionine = epoxyqueuosine(34) in tRNA + adenine + L-methionine + 2 H(+). Its pathway is tRNA modification; tRNA-queuosine biosynthesis. Transfers and isomerizes the ribose moiety from AdoMet to the 7-aminomethyl group of 7-deazaguanine (preQ1-tRNA) to give epoxyqueuosine (oQ-tRNA). The chain is S-adenosylmethionine:tRNA ribosyltransferase-isomerase from Prochlorococcus marinus (strain NATL2A).